The chain runs to 614 residues: NEDD8 ultimate buster 1 (614 aa).

Coiled coils occupy residues 36-71 and 151-206; these read LAVK…IERG and NVKA…MVVD. 3 consecutive UBA domains span residues 373 to 413, 423 to 469, and 488 to 528; these read YIDP…ISNR, EEKE…LLSN, and SPSQ…LAHH. The short motif at 413–430 is the Nuclear localization signal element; sequence RREELAQIRKEEKEKRRR. The segment at 426–473 is NEDD8-binding 1; it reads EKRRRRLENVNTLRGMGYSTQAAKQALHQARGNLDDALKVLLSNPHMW. The segment at 531-590 is disordered; it reads SLPPDLQFSGEDSSPTPSTSPSDSAGTSSASTDEDMETEAVNEILEDIPEHEEDYLDSTL. The span at 539-561 shows a compositional bias: low complexity; it reads SGEDSSPTPSTSPSDSAGTSSAS. The tract at residues 549–597 is NEDD8-binding 2; that stretch reads TSPSDSAGTSSASTDEDMETEAVNEILEDIPEHEEDYLDSTLEDEEVII. Residues 562 to 590 show a composition bias toward acidic residues; sequence TDEDMETEAVNEILEDIPEHEEDYLDSTL.

In terms of assembly, directly interacts with NEDD8 and PSMD4/S5a, a member of the regulatory subunit of the 26S proteasome. Interacts with AIPL1. The interaction with UBD via UBA domains facilitates the linking of UBD-conjugated target protein to the proteasome complex and accelerates UBD degradation and that of its conjugates.

It localises to the nucleus. Functionally, specific down-regulator of the NEDD8 conjugation system. Recruits NEDD8, UBD, and their conjugates to the proteasome for degradation. In Mus musculus (Mouse), this protein is NEDD8 ultimate buster 1 (Nub1).